A 143-amino-acid polypeptide reads, in one-letter code: Large-conductance mechanosensitive channel (143 aa).

2 helical membrane passes run 10 to 30 (FAVK…GAFS) and 89 to 109 (GSFI…FLMV).

The protein belongs to the MscL family. As to quaternary structure, homopentamer.

It localises to the cell inner membrane. Its function is as follows. Channel that opens in response to stretch forces in the membrane lipid bilayer. May participate in the regulation of osmotic pressure changes within the cell. The polypeptide is Large-conductance mechanosensitive channel (Burkholderia cenocepacia (strain HI2424)).